The following is a 485-amino-acid chain: UDP-N-acetylmuramoyl-L-alanyl-D-glutamate--2,6-diaminopimelate ligase (485 aa).

Residue Ser-28 coordinates UDP-N-acetyl-alpha-D-muramoyl-L-alanyl-D-glutamate. Residue 108–114 coordinates ATP; it reads GTNGKTS. UDP-N-acetyl-alpha-D-muramoyl-L-alanyl-D-glutamate is bound by residues Asn-147, 148-149, Ser-175, and Arg-183; that span reads TT. Residue Lys-215 is modified to N6-carboxylysine. Residues Arg-374, 398–401, Gly-449, and Glu-453 each bind meso-2,6-diaminopimelate; that span reads DNPR. Residues 398 to 401 carry the Meso-diaminopimelate recognition motif motif; that stretch reads DNPR.

This sequence belongs to the MurCDEF family. MurE subfamily. Requires Mg(2+) as cofactor. Carboxylation is probably crucial for Mg(2+) binding and, consequently, for the gamma-phosphate positioning of ATP.

The protein resides in the cytoplasm. The catalysed reaction is UDP-N-acetyl-alpha-D-muramoyl-L-alanyl-D-glutamate + meso-2,6-diaminopimelate + ATP = UDP-N-acetyl-alpha-D-muramoyl-L-alanyl-gamma-D-glutamyl-meso-2,6-diaminopimelate + ADP + phosphate + H(+). It participates in cell wall biogenesis; peptidoglycan biosynthesis. In terms of biological role, catalyzes the addition of meso-diaminopimelic acid to the nucleotide precursor UDP-N-acetylmuramoyl-L-alanyl-D-glutamate (UMAG) in the biosynthesis of bacterial cell-wall peptidoglycan. The sequence is that of UDP-N-acetylmuramoyl-L-alanyl-D-glutamate--2,6-diaminopimelate ligase from Fusobacterium nucleatum subsp. nucleatum (strain ATCC 25586 / DSM 15643 / BCRC 10681 / CIP 101130 / JCM 8532 / KCTC 2640 / LMG 13131 / VPI 4355).